Reading from the N-terminus, the 446-residue chain is Glutamyl-tRNA reductase (446 aa).

Substrate contacts are provided by residues 49 to 52 (TCNR), Ser-109, 114 to 116 (ETQ), and Gln-120. Cys-50 serves as the catalytic Nucleophile. Residue 189–194 (GAGEMA) participates in NADP(+) binding.

The protein belongs to the glutamyl-tRNA reductase family. In terms of assembly, homodimer.

It catalyses the reaction (S)-4-amino-5-oxopentanoate + tRNA(Glu) + NADP(+) = L-glutamyl-tRNA(Glu) + NADPH + H(+). Its pathway is porphyrin-containing compound metabolism; protoporphyrin-IX biosynthesis; 5-aminolevulinate from L-glutamyl-tRNA(Glu): step 1/2. In terms of biological role, catalyzes the NADPH-dependent reduction of glutamyl-tRNA(Glu) to glutamate 1-semialdehyde (GSA). This chain is Glutamyl-tRNA reductase, found in Macrococcus caseolyticus (strain JCSC5402) (Macrococcoides caseolyticum).